The chain runs to 69 residues: Sec-independent protein translocase protein TatA (69 aa).

The chain crosses the membrane as a helical span at residues 1-21 (MFGLGGQELILILMIILLLFG). The interval 49 to 69 (EFNKAMDDETPKKKDFGPDRE) is disordered.

It belongs to the TatA/E family. As to quaternary structure, forms a complex with TatC.

The protein resides in the cell inner membrane. Functionally, part of the twin-arginine translocation (Tat) system that transports large folded proteins containing a characteristic twin-arginine motif in their signal peptide across membranes. TatA could form the protein-conducting channel of the Tat system. The polypeptide is Sec-independent protein translocase protein TatA (Chlorobium luteolum (strain DSM 273 / BCRC 81028 / 2530) (Pelodictyon luteolum)).